Consider the following 479-residue polypeptide: Ribosomal RNA small subunit methyltransferase F (479 aa).

Residues Ala-125–Lys-131, Glu-149, Asp-176, and Asp-194 contribute to the S-adenosyl-L-methionine site. Residue Cys-247 is the Nucleophile of the active site.

It belongs to the class I-like SAM-binding methyltransferase superfamily. RsmB/NOP family.

The protein resides in the cytoplasm. The catalysed reaction is cytidine(1407) in 16S rRNA + S-adenosyl-L-methionine = 5-methylcytidine(1407) in 16S rRNA + S-adenosyl-L-homocysteine + H(+). Functionally, specifically methylates the cytosine at position 1407 (m5C1407) of 16S rRNA. This chain is Ribosomal RNA small subunit methyltransferase F, found in Escherichia coli (strain UTI89 / UPEC).